We begin with the raw amino-acid sequence, 357 residues long: Phosphate acyltransferase (357 aa).

The protein belongs to the PlsX family. As to quaternary structure, homodimer. Probably interacts with PlsY.

It is found in the cytoplasm. The enzyme catalyses a fatty acyl-[ACP] + phosphate = an acyl phosphate + holo-[ACP]. Its pathway is lipid metabolism; phospholipid metabolism. Functionally, catalyzes the reversible formation of acyl-phosphate (acyl-PO(4)) from acyl-[acyl-carrier-protein] (acyl-ACP). This enzyme utilizes acyl-ACP as fatty acyl donor, but not acyl-CoA. The sequence is that of Phosphate acyltransferase from Roseobacter denitrificans (strain ATCC 33942 / OCh 114) (Erythrobacter sp. (strain OCh 114)).